Reading from the N-terminus, the 302-residue chain is Oxygen-dependent coproporphyrinogen-III oxidase (302 aa).

A substrate-binding site is contributed by Ser94. Positions 98 and 108 each coordinate a divalent metal cation. The Proton donor role is filled by His108. 110–112 lines the substrate pocket; it reads NVR. A divalent metal cation contacts are provided by His147 and His177. Positions 242-277 are important for dimerization; it reads YVEFNLVYDRGTLFGLQTGGRTESILMSMPPLARWE. 260-262 contacts substrate; the sequence is GGR.

It belongs to the aerobic coproporphyrinogen-III oxidase family. In terms of assembly, homodimer. A divalent metal cation is required as a cofactor.

It is found in the cytoplasm. It carries out the reaction coproporphyrinogen III + O2 + 2 H(+) = protoporphyrinogen IX + 2 CO2 + 2 H2O. It participates in porphyrin-containing compound metabolism; protoporphyrin-IX biosynthesis; protoporphyrinogen-IX from coproporphyrinogen-III (O2 route): step 1/1. Its function is as follows. Involved in the heme biosynthesis. Catalyzes the aerobic oxidative decarboxylation of propionate groups of rings A and B of coproporphyrinogen-III to yield the vinyl groups in protoporphyrinogen-IX. This chain is Oxygen-dependent coproporphyrinogen-III oxidase, found in Aeromonas hydrophila subsp. hydrophila (strain ATCC 7966 / DSM 30187 / BCRC 13018 / CCUG 14551 / JCM 1027 / KCTC 2358 / NCIMB 9240 / NCTC 8049).